The primary structure comprises 78 residues: Small ribosomal subunit protein bS18 (78 aa).

Belongs to the bacterial ribosomal protein bS18 family. Part of the 30S ribosomal subunit. Forms a tight heterodimer with protein bS6.

Functionally, binds as a heterodimer with protein bS6 to the central domain of the 16S rRNA, where it helps stabilize the platform of the 30S subunit. The polypeptide is Small ribosomal subunit protein bS18 (Nocardioides sp. (strain ATCC BAA-499 / JS614)).